A 437-amino-acid chain; its full sequence is Type II methyltransferase M.HgiBI (437 aa).

An SAM-dependent MTase C5-type domain is found at 4–431; that stretch reads FRFIDLFAGI…KALQCVKLFE (428 aa). The active site involves C75.

Belongs to the class I-like SAM-binding methyltransferase superfamily. C5-methyltransferase family.

It carries out the reaction a 2'-deoxycytidine in DNA + S-adenosyl-L-methionine = a 5-methyl-2'-deoxycytidine in DNA + S-adenosyl-L-homocysteine + H(+). In terms of biological role, a methylase that recognizes the double-stranded sequence 5'-GGWCC-3', methylates C-? on both strands, and protects the DNA from cleavage by the HgiBI endonuclease. This system is less active than isoschizomeric RM.HgiEI. This is Type II methyltransferase M.HgiBI from Herpetosiphon aurantiacus (Herpetosiphon giganteus).